Reading from the N-terminus, the 323-residue chain is Thymidylate synthase (323 aa).

DUMP-binding positions include Arg-21 and 172-173 (RR). Cys-192 (nucleophile) is an active-site residue. DUMP-binding positions include 214 to 217 (RSND), Asn-225, and 255 to 257 (HVY). Asp-217 lines the (6R)-5,10-methylene-5,6,7,8-tetrahydrofolate pocket. Ala-322 provides a ligand contact to (6R)-5,10-methylene-5,6,7,8-tetrahydrofolate.

It belongs to the thymidylate synthase family. Bacterial-type ThyA subfamily. As to quaternary structure, homodimer.

The protein resides in the cytoplasm. It carries out the reaction dUMP + (6R)-5,10-methylene-5,6,7,8-tetrahydrofolate = 7,8-dihydrofolate + dTMP. It functions in the pathway pyrimidine metabolism; dTTP biosynthesis. Its function is as follows. Catalyzes the reductive methylation of 2'-deoxyuridine-5'-monophosphate (dUMP) to 2'-deoxythymidine-5'-monophosphate (dTMP) while utilizing 5,10-methylenetetrahydrofolate (mTHF) as the methyl donor and reductant in the reaction, yielding dihydrofolate (DHF) as a by-product. This enzymatic reaction provides an intracellular de novo source of dTMP, an essential precursor for DNA biosynthesis. The polypeptide is Thymidylate synthase (Pseudomonas putida (strain ATCC 47054 / DSM 6125 / CFBP 8728 / NCIMB 11950 / KT2440)).